Here is a 696-residue protein sequence, read N- to C-terminus: Tensin-4 (696 aa).

An N-terminal signal peptide occupies residues 1-14; the sequence is MSSSLLAGGHMVSL. 3 disordered regions span residues 157–246, 271–344, and 356–416; these read LDGP…RAPQ, SLPH…CPAS, and LING…KDMQ. A compositionally biased stretch (polar residues) spans 192–203; it reads SSSNESLIFSGN. Ser230 carries the post-translational modification Phosphoserine. A compositionally biased stretch (low complexity) spans 271–304; it reads SLPHSSLSSYPSSSRSLGSPASSSSSLHSLDRGS. 2 stretches are compositionally biased toward polar residues: residues 326–344 and 372–397; these read QAVQ…CPAS and PGHQ…SPSK. Residues 429 to 536 enclose the SH2 domain; sequence WFKPSITREQ…ALPCKLTIPQ (108 aa). Positions 563 to 690 constitute a PTB domain; that stretch reads CHTLYLSSVS…QVISLVTALL (128 aa).

Belongs to the PTEN phosphatase protein family. As to quaternary structure, interacts (via SH2 domain) with Rho GTPase-activating protein DLC1 (via C-terminus); the interaction is independent of DLC1 tyrosine phosphorylation. Interacts with integrin ITGB1; the interaction displaces tensin TNS3 from the ITGB1 cytoplasmic tail and promotes ITGB1 stability. Interacts (via SH2 domain) with E3 ubiquitin-protein ligase CBL (phosphorylated on 'Tyr-780'); the interaction is enhanced in the presence of EGF and reduces interaction of CBL with EGFR. Interacts (via SH2 domain) with receptor tyrosine kinase MET (when phosphorylated); the interaction increases MET protein stability.

It localises to the cell junction. Its subcellular location is the focal adhesion. The protein localises to the cytoplasm. It is found in the cytoskeleton. In terms of biological role, promotes EGF-induced cell migration by displacing tensin TNS3 from the cytoplasmic tail of integrin ITGB1 which results in dissociation of TNS3 from focal adhesions, disassembly of actin stress fibers and initiation of cell migration. Suppresses ligand-induced degradation of EGFR by reducing EGFR ubiquitination in the presence of EGF. Increases MET protein stability by inhibiting MET endocytosis and subsequent lysosomal degradation which leads to increased cell survival, proliferation and migration. This Mus musculus (Mouse) protein is Tensin-4 (Tns4).